We begin with the raw amino-acid sequence, 308 residues long: Aspartate carbamoyltransferase catalytic subunit (308 aa).

Carbamoyl phosphate-binding residues include Arg51 and Thr52. Lys79 is a binding site for L-aspartate. Positions 101, 130, and 133 each coordinate carbamoyl phosphate. L-aspartate contacts are provided by Arg163 and Arg215. Residues Ala258 and Pro259 each coordinate carbamoyl phosphate.

The protein belongs to the aspartate/ornithine carbamoyltransferase superfamily. ATCase family. In terms of assembly, heterododecamer (2C3:3R2) of six catalytic PyrB chains organized as two trimers (C3), and six regulatory PyrI chains organized as three dimers (R2).

The enzyme catalyses carbamoyl phosphate + L-aspartate = N-carbamoyl-L-aspartate + phosphate + H(+). It participates in pyrimidine metabolism; UMP biosynthesis via de novo pathway; (S)-dihydroorotate from bicarbonate: step 2/3. Catalyzes the condensation of carbamoyl phosphate and aspartate to form carbamoyl aspartate and inorganic phosphate, the committed step in the de novo pyrimidine nucleotide biosynthesis pathway. The sequence is that of Aspartate carbamoyltransferase catalytic subunit from Pediococcus pentosaceus (strain ATCC 25745 / CCUG 21536 / LMG 10740 / 183-1w).